Reading from the N-terminus, the 374-residue chain is N5-carboxyaminoimidazole ribonucleotide synthase (374 aa).

ATP-binding positions include Arg-108, Lys-148, 153–159 (GYDGKGQ), 183–186 (EKYL), Glu-191, His-214, and 266–267 (NE). Positions 112 to 296 (KETLKSAGTK…QFDTHILAVT (185 aa)) constitute an ATP-grasp domain.

Belongs to the PurK/PurT family. As to quaternary structure, homodimer.

It carries out the reaction 5-amino-1-(5-phospho-beta-D-ribosyl)imidazole + hydrogencarbonate + ATP = 5-carboxyamino-1-(5-phospho-D-ribosyl)imidazole + ADP + phosphate + 2 H(+). Its pathway is purine metabolism; IMP biosynthesis via de novo pathway; 5-amino-1-(5-phospho-D-ribosyl)imidazole-4-carboxylate from 5-amino-1-(5-phospho-D-ribosyl)imidazole (N5-CAIR route): step 1/2. In terms of biological role, catalyzes the ATP-dependent conversion of 5-aminoimidazole ribonucleotide (AIR) and HCO(3)(-) to N5-carboxyaminoimidazole ribonucleotide (N5-CAIR). The chain is N5-carboxyaminoimidazole ribonucleotide synthase from Staphylococcus aureus (strain MSSA476).